Consider the following 377-residue polypeptide: Nitric oxide reductase FlRd-NAD(+) reductase (377 aa).

This sequence belongs to the FAD-dependent oxidoreductase family. Requires FAD as cofactor.

The protein resides in the cytoplasm. It catalyses the reaction 2 reduced [nitric oxide reductase rubredoxin domain] + NAD(+) + H(+) = 2 oxidized [nitric oxide reductase rubredoxin domain] + NADH. It functions in the pathway nitrogen metabolism; nitric oxide reduction. Functionally, one of at least two accessory proteins for anaerobic nitric oxide (NO) reductase. Reduces the rubredoxin moiety of NO reductase. This Escherichia coli O157:H7 protein is Nitric oxide reductase FlRd-NAD(+) reductase.